Reading from the N-terminus, the 420-residue chain is Small ribosomal subunit protein mS75 (420 aa).

The N-terminal 11 residues, 1–11, are a transit peptide targeting the mitochondrion; that stretch reads MYNLSRIIYRF. Disordered stretches follow at residues 99 to 120 and 390 to 420; these read RQKN…DVMS and RYSP…GKQT. The span at 102 to 114 shows a compositional bias: polar residues; it reads NAANPSSDNTPSD. Basic residues predominate over residues 396-409; it reads QKRRSKRKQKRKER.

Component of the mitochondrial ribosome small subunit. As to expression, expressed at high levels in reproductive organs and, at lower levels, ubiquitously.

Its subcellular location is the mitochondrion. Its function is as follows. Essential for fertility (male and female gametophyte functions and development). Required for the integrity of female gametic mitochondria. Modulates male gametophyte functions, including pollen tube growth and style penetration. Involved in mitochondrial-driven cell-to-cell communication in embryo sacs during female gametes maturation (including embryogenesis initiation and endosperm development), especially for reciprocal signaling between central and egg cells which regulates reciprocal development. The polypeptide is Small ribosomal subunit protein mS75 (Arabidopsis thaliana (Mouse-ear cress)).